The following is a 356-amino-acid chain: sn-glycerol-3-phosphate import ATP-binding protein UgpC (356 aa).

The ABC transporter domain maps to 4-235 (LKLQAVTKSW…PASLFVASFI (232 aa)). 37-44 (GPSGCGKS) lines the ATP pocket.

This sequence belongs to the ABC transporter superfamily. sn-glycerol-3-phosphate importer (TC 3.A.1.1.3) family. As to quaternary structure, the complex is composed of two ATP-binding proteins (UgpC), two transmembrane proteins (UgpA and UgpE) and a solute-binding protein (UgpB).

It is found in the cell inner membrane. It carries out the reaction sn-glycerol 3-phosphate(out) + ATP + H2O = sn-glycerol 3-phosphate(in) + ADP + phosphate + H(+). Its function is as follows. Part of the ABC transporter complex UgpBAEC involved in sn-glycerol-3-phosphate (G3P) import. Responsible for energy coupling to the transport system. This chain is sn-glycerol-3-phosphate import ATP-binding protein UgpC, found in Escherichia coli O6:K15:H31 (strain 536 / UPEC).